A 278-amino-acid chain; its full sequence is Indole-3-glycerol phosphate synthase (278 aa).

The protein belongs to the TrpC family.

The catalysed reaction is 1-(2-carboxyphenylamino)-1-deoxy-D-ribulose 5-phosphate + H(+) = (1S,2R)-1-C-(indol-3-yl)glycerol 3-phosphate + CO2 + H2O. The protein operates within amino-acid biosynthesis; L-tryptophan biosynthesis; L-tryptophan from chorismate: step 4/5. The sequence is that of Indole-3-glycerol phosphate synthase from Pseudomonas fluorescens (strain Pf0-1).